The following is a 196-amino-acid chain: Shikimate kinase (196 aa).

ATP is bound at residue 32–37 (GAGKSA). Position 36 (Ser36) interacts with Mg(2+). Substrate contacts are provided by Asp54, Arg78, and Gly100. Arg138 lines the ATP pocket. Arg157 is a substrate binding site. Arg174 contacts ATP.

Belongs to the shikimate kinase family. Monomer. Mg(2+) is required as a cofactor.

The protein localises to the cytoplasm. The enzyme catalyses shikimate + ATP = 3-phosphoshikimate + ADP + H(+). It functions in the pathway metabolic intermediate biosynthesis; chorismate biosynthesis; chorismate from D-erythrose 4-phosphate and phosphoenolpyruvate: step 5/7. Functionally, catalyzes the specific phosphorylation of the 3-hydroxyl group of shikimic acid using ATP as a cosubstrate. The chain is Shikimate kinase from Rhizobium leguminosarum bv. trifolii (strain WSM2304).